Reading from the N-terminus, the 374-residue chain is UPF0754 membrane protein SAS1767 (374 aa).

Helical transmembrane passes span 4 to 24 and 354 to 374; these read LFIIIFMIVVGAIIGGITNVI and SLGFILGGIIGFFQGLVAIFV.

The protein belongs to the UPF0754 family.

It is found in the cell membrane. The sequence is that of UPF0754 membrane protein SAS1767 from Staphylococcus aureus (strain MSSA476).